Consider the following 226-residue polypeptide: ATP synthase F(0) complex subunit a (226 aa).

The next 6 membrane-spanning stretches (helical) occupy residues 6 to 26 (FASFITPTLMGLPIVLLIIMF), 68 to 88 (WSLMLISLIMFIGSTNLLGLL), 97 to 117 (QLSMNLGMAIPLWAGAVITGF), 138 to 158 (IPMLIIIETISLFIQPMALAV), 164 to 184 (ITAGHLLMHLIGGATLVLTSI), and 189 to 209 (AILTFIILVLLTMLEFAVALI).

This sequence belongs to the ATPase A chain family. As to quaternary structure, component of the ATP synthase complex composed at least of ATP5F1A/subunit alpha, ATP5F1B/subunit beta, ATP5MC1/subunit c (homooctomer), MT-ATP6/subunit a, MT-ATP8/subunit 8, ATP5ME/subunit e, ATP5MF/subunit f, ATP5MG/subunit g, ATP5MK/subunit k, ATP5MJ/subunit j, ATP5F1C/subunit gamma, ATP5F1D/subunit delta, ATP5F1E/subunit epsilon, ATP5PF/subunit F6, ATP5PB/subunit b, ATP5PD/subunit d, ATP5PO/subunit OSCP. ATP synthase complex consists of a soluble F(1) head domain (subunits alpha(3) and beta(3)) - the catalytic core - and a membrane F(0) domain - the membrane proton channel (subunits c, a, 8, e, f, g, k and j). These two domains are linked by a central stalk (subunits gamma, delta, and epsilon) rotating inside the F1 region and a stationary peripheral stalk (subunits F6, b, d, and OSCP). Interacts with DNAJC30; interaction is direct.

The protein localises to the mitochondrion inner membrane. The enzyme catalyses H(+)(in) = H(+)(out). In terms of biological role, subunit a, of the mitochondrial membrane ATP synthase complex (F(1)F(0) ATP synthase or Complex V) that produces ATP from ADP in the presence of a proton gradient across the membrane which is generated by electron transport complexes of the respiratory chain. ATP synthase complex consist of a soluble F(1) head domain - the catalytic core - and a membrane F(1) domain - the membrane proton channel. These two domains are linked by a central stalk rotating inside the F(1) region and a stationary peripheral stalk. During catalysis, ATP synthesis in the catalytic domain of F(1) is coupled via a rotary mechanism of the central stalk subunits to proton translocation. With the subunit c (ATP5MC1), forms the proton-conducting channel in the F(0) domain, that contains two crucial half-channels (inlet and outlet) that facilitate proton movement from the mitochondrial intermembrane space (IMS) into the matrix. Protons are taken up via the inlet half-channel and released through the outlet half-channel, following a Grotthuss mechanism. The polypeptide is ATP synthase F(0) complex subunit a (Ictidomys tridecemlineatus (Thirteen-lined ground squirrel)).